The primary structure comprises 184 residues: UPF0179 protein Pcal_2106 (184 aa).

A compositionally biased stretch (low complexity) spans 146 to 161 (GASSAGISQAPSRVPL). A disordered region spans residues 146-184 (GASSAGISQAPSRVPLSKPPSKSPSPQKSSPRGPTSRLP).

Belongs to the UPF0179 family.

The protein is UPF0179 protein Pcal_2106 of Pyrobaculum calidifontis (strain DSM 21063 / JCM 11548 / VA1).